The primary structure comprises 167 residues: I-Kappa-B like protein I1 (167 aa).

ANK repeat units lie at residues 54-86 (HGKQ…DING), 91-121 (FGNT…NMGI), and 125-154 (LFKT…QCRI).

This sequence belongs to the polydnaviridae I-Kappa-B-like protein family.

Suppresses the host immune response through NF-kappa-B inactivation. Possesses ankyrin repeat domains required for NF-kappa-B binding but lacks the regulatory regions required for dissociation from NF-kappa-B and degradation. Therefore, prevents host NF-kappa-B release and subsequent activation. This Microplitis demolitor (Parasitoid wasp) protein is I-Kappa-B like protein I1 (I1).